The sequence spans 233 residues: Ribonuclease 3 (233 aa).

The region spanning 4–126 is the RNase III domain; sequence LNKLMERLGH…IVGSIYIDAG (123 aa). A Mg(2+)-binding site is contributed by E39. Residue D43 is part of the active site. Mg(2+)-binding residues include D112 and E115. Residue E115 is part of the active site. The 70-residue stretch at 153–222 folds into the DRBM domain; sequence DAKSLLQEWL…AKRFLELLDD (70 aa).

It belongs to the ribonuclease III family. As to quaternary structure, homodimer. It depends on Mg(2+) as a cofactor.

Its subcellular location is the cytoplasm. The catalysed reaction is Endonucleolytic cleavage to 5'-phosphomonoester.. Digests double-stranded RNA. Involved in the processing of primary rRNA transcript to yield the immediate precursors to the large and small rRNAs (23S and 16S). Processes some mRNAs, and tRNAs when they are encoded in the rRNA operon. Processes pre-crRNA and tracrRNA of type II CRISPR loci if present in the organism. The polypeptide is Ribonuclease 3 (Coxiella burnetii (strain CbuG_Q212) (Coxiella burnetii (strain Q212))).